The primary structure comprises 257 residues: Mitochondrial distribution and morphology protein 12 (257 aa).

Residues 1 to 256 (MSFEINWEKL…WPSWVNLDFN (256 aa)) enclose the SMP-LTD domain. Residues 74 to 98 (YEEDNETSSEMHGRDGQNVGESGEE) form a disordered region.

It belongs to the MDM12 family. In terms of assembly, component of the ER-mitochondria encounter structure (ERMES) or MDM complex, composed of MMM1, MDM10, MDM12 and MDM34. An MMM1 homodimer associates with one molecule of MDM12 on each side in a pairwise head-to-tail manner, and the SMP-LTD domains of MMM1 and MDM12 generate a continuous hydrophobic tunnel for phospholipid trafficking.

The protein localises to the mitochondrion outer membrane. It localises to the endoplasmic reticulum membrane. Component of the ERMES/MDM complex, which serves as a molecular tether to connect the endoplasmic reticulum (ER) and mitochondria. Components of this complex are involved in the control of mitochondrial shape and protein biogenesis, and function in nonvesicular lipid trafficking between the ER and mitochondria. MDM12 is required for the interaction of the ER-resident membrane protein MMM1 and the outer mitochondrial membrane-resident beta-barrel protein MDM10. The MDM12-MMM1 subcomplex functions in the major beta-barrel assembly pathway that is responsible for biogenesis of all mitochondrial outer membrane beta-barrel proteins, and acts in a late step after the SAM complex. The MDM10-MDM12-MMM1 subcomplex further acts in the TOM40-specific pathway after the action of the MDM12-MMM1 complex. Essential for establishing and maintaining the structure of mitochondria and maintenance of mtDNA nucleoids. This Candida glabrata (strain ATCC 2001 / BCRC 20586 / JCM 3761 / NBRC 0622 / NRRL Y-65 / CBS 138) (Yeast) protein is Mitochondrial distribution and morphology protein 12.